Here is a 469-residue protein sequence, read N- to C-terminus: Diacetylchitobiose binding protein NgcE (469 aa).

A signal peptide (tat-type signal) is located at residues 1 to 37 (MTIRAGSLDRRTLLRGAIATAAMGSFAVACSSPSSED). The tract at residues 30-54 (CSSPSSEDKESDSGPKGEKSANNPF) is disordered. A compositionally biased stretch (basic and acidic residues) spans 35–48 (SEDKESDSGPKGEK).

Belongs to the bacterial solute-binding protein 1 family. As to quaternary structure, the complex is composed of two ATP-binding proteins (MsiK), two transmembrane proteins (NgcF and NgcG) and a solute-binding protein (NgcE). Post-translationally, predicted to be exported by the Tat system. The position of the signal peptide cleavage has not been experimentally proven.

Its subcellular location is the cell membrane. Functionally, part of the ABC transporter complex NgcEFG-MsiK involved in N,N'-diacetylchitobiose ((GlcNAc)2) uptake. Binds (GlcNAc)2. Can also bind GlcNAc. This is Diacetylchitobiose binding protein NgcE from Streptomyces coelicolor (strain ATCC BAA-471 / A3(2) / M145).